Reading from the N-terminus, the 176-residue chain is Dual-action ribosomal maturation protein DarP (176 aa).

It belongs to the DarP family.

It localises to the cytoplasm. In terms of biological role, member of a network of 50S ribosomal subunit biogenesis factors which assembles along the 30S-50S interface, preventing incorrect 23S rRNA structures from forming. Promotes peptidyl transferase center (PTC) maturation. The protein is Dual-action ribosomal maturation protein DarP of Actinobacillus pleuropneumoniae serotype 5b (strain L20).